Reading from the N-terminus, the 138-residue chain is Small ribosomal subunit protein uS11c (138 aa).

The disordered stretch occupies residues 1-22; sequence MTKPIPRIGSRRNGRIGSRKNA. Over residues 9–22 the composition is skewed to basic residues; the sequence is GSRRNGRIGSRKNA.

Belongs to the universal ribosomal protein uS11 family. In terms of assembly, part of the 30S ribosomal subunit.

The protein resides in the plastid. Its subcellular location is the chloroplast. The polypeptide is Small ribosomal subunit protein uS11c (Dioscorea elephantipes (Elephant's foot yam)).